We begin with the raw amino-acid sequence, 267 residues long: NAD(P)H-hydrate epimerase (267 aa).

Positions 27–242 constitute a YjeF N-terminal domain; it reads AQKIDEDLMS…DLEAKFDLQL (216 aa). (6S)-NADPHX is bound at residue 78–82; sequence NQGGD. Residues Q79 and D142 each coordinate K(+). Residues 146-152 and D185 each bind (6S)-NADPHX; that span reads GFNFKGD. K(+) is bound at residue S188.

It belongs to the NnrE/AIBP family. Requires K(+) as cofactor.

The protein localises to the cytoplasm. The protein resides in the mitochondrion. It catalyses the reaction (6R)-NADHX = (6S)-NADHX. The enzyme catalyses (6R)-NADPHX = (6S)-NADPHX. In terms of biological role, catalyzes the epimerization of the S- and R-forms of NAD(P)HX, a damaged form of NAD(P)H that is a result of enzymatic or heat-dependent hydration. This is a prerequisite for the S-specific NAD(P)H-hydrate dehydratase to allow the repair of both epimers of NAD(P)HX. In Mycosarcoma maydis (Corn smut fungus), this protein is NAD(P)H-hydrate epimerase.